Consider the following 365-residue polypeptide: Chorismate synthase (365 aa).

An NADP(+)-binding site is contributed by Arg-48. FMN contacts are provided by residues 130-132 (RSS), 242-243 (NA), Gly-290, 305-309 (KPTSS), and Arg-331.

This sequence belongs to the chorismate synthase family. Homotetramer. Requires FMNH2 as cofactor.

It carries out the reaction 5-O-(1-carboxyvinyl)-3-phosphoshikimate = chorismate + phosphate. The protein operates within metabolic intermediate biosynthesis; chorismate biosynthesis; chorismate from D-erythrose 4-phosphate and phosphoenolpyruvate: step 7/7. Functionally, catalyzes the anti-1,4-elimination of the C-3 phosphate and the C-6 proR hydrogen from 5-enolpyruvylshikimate-3-phosphate (EPSP) to yield chorismate, which is the branch point compound that serves as the starting substrate for the three terminal pathways of aromatic amino acid biosynthesis. This reaction introduces a second double bond into the aromatic ring system. This Erythrobacter litoralis (strain HTCC2594) protein is Chorismate synthase.